Here is a 291-residue protein sequence, read N- to C-terminus: Ribonuclease Z (291 aa).

Histidine 61, histidine 63, aspartate 65, histidine 66, histidine 133, aspartate 201, and histidine 257 together coordinate Zn(2+). The active-site Proton acceptor is the aspartate 65.

This sequence belongs to the RNase Z family. In terms of assembly, homodimer. Zn(2+) serves as cofactor.

It catalyses the reaction Endonucleolytic cleavage of RNA, removing extra 3' nucleotides from tRNA precursor, generating 3' termini of tRNAs. A 3'-hydroxy group is left at the tRNA terminus and a 5'-phosphoryl group is left at the trailer molecule.. In terms of biological role, zinc phosphodiesterase, which displays some tRNA 3'-processing endonuclease activity. Probably involved in tRNA maturation, by removing a 3'-trailer from precursor tRNA. This Saccharolobus solfataricus (strain ATCC 35092 / DSM 1617 / JCM 11322 / P2) (Sulfolobus solfataricus) protein is Ribonuclease Z.